Consider the following 852-residue polypeptide: Protein mono-ADP-ribosyltransferase PARP8 (852 aa).

2 disordered regions span residues 113 to 134 (NGEESRQNSTVEEDSEGDNDSE) and 289 to 310 (SPSYPPPGCGKSKSKLKPEQDG). Residues 123–134 (VEEDSEGDNDSE) are compositionally biased toward acidic residues. C332, C366, C375, and C394 each carry ADP-ribosylcysteine. Residues 615–842 (EMTQAPYLEI…QEGGIHKEIL (228 aa)) enclose the PARP catalytic domain. Positions 748-775 (QKVSSKDEPASSSKSSNASQSQKKGQQS) are disordered. The span at 757-775 (ASSSKSSNASQSQKKGQQS) shows a compositional bias: low complexity.

It belongs to the ARTD/PARP family. Post-translationally, auto-mono-ADP-ribosylated.

It carries out the reaction L-cysteinyl-[protein] + NAD(+) = S-(ADP-D-ribosyl)-L-cysteinyl-[protein] + nicotinamide + H(+). In terms of biological role, mono-ADP-ribosyltransferase that mediates mono-ADP-ribosylation of target proteins. The chain is Protein mono-ADP-ribosyltransferase PARP8 from Mus musculus (Mouse).